Reading from the N-terminus, the 396-residue chain is Gap junction gamma-1 protein (396 aa).

Over 1–18 (MSWSFLTRLLEEIHNHST) the chain is Cytoplasmic. Residues 19–39 (FVGKIWLTVLIVFRIVLTAVG) form a helical membrane-spanning segment. Residues 40–75 (GESIYYDEQSKFVCNTEQPGCENVCYDAFAPLSHVR) are Extracellular-facing. The helical transmembrane segment at 76-96 (FWVFQIILVATPSVMYLGYAI) threads the bilayer. At 97-175 (HKIAKMEHGE…RRIREDGLMK (79 aa)) the chain is on the cytoplasmic side. The segment at 145 to 165 (ELESEKENKEQSQPKPKHDGR) is disordered. The segment covering 147–156 (ESEKENKEQS) has biased composition (basic and acidic residues). The helical transmembrane segment at 176 to 198 (IYVLQLLARTVFEVGFLIGQYFL) threads the bilayer. At 199-229 (YGFQVHPFYVCSRLPCPHKIDCFISRPTEKT) the chain is on the extracellular side. Residues 230–250 (IFLLIMYGVTGLCLLLNIWEM) traverse the membrane as a helical segment. The Cytoplasmic portion of the chain corresponds to 251–396 (LHLGFGTIRD…SGDGKTSVWI (146 aa)). Positions 303 to 358 (ELSNAKIAYKQNKANIAQEQQYGSHEEHLPADLETLQREIRMAQERLDLAIQAYHH) form a coiled coil. Positions 357–396 (HHQNNPHGPREKKAKVGSKSGSNKSSISSKSGDGKTSVWI) are disordered. Residues 373–396 (GSKSGSNKSSISSKSGDGKTSVWI) are compositionally biased toward low complexity.

The protein belongs to the connexin family. Gamma-type subfamily. In terms of assembly, a connexon is composed of a hexamer of connexins. Interacts with CNST.

Its subcellular location is the cell membrane. It localises to the cell junction. The protein resides in the gap junction. Its function is as follows. One gap junction consists of a cluster of closely packed pairs of transmembrane channels, the connexons, through which materials of low MW diffuse from one cell to a neighboring cell. This is Gap junction gamma-1 protein (GJC1) from Cricetulus griseus (Chinese hamster).